We begin with the raw amino-acid sequence, 793 residues long: Short transient receptor potential channel 1 (793 aa).

The disordered stretch occupies residues 1–30 (MMAALYPSTDLSGASSSSLPSSPSSSSPNE). Over 1 to 345 (MMAALYPSTD…FGQMSGYRRK (345 aa)) the chain is Cytoplasmic. Residues 15–28 (SSSSLPSSPSSSSP) are compositionally biased toward low complexity. ANK repeat units follow at residues 46–75 (LNEKLFLLACDKGDYYMVKKILEENSSGDL), 83–109 (LGRNAVTITIENENLDILQLLLDYGCQ), 111–156 (ADAL…EYST), and 158–180 (MDVAPVILAAHRNNYEILTMLLK). 4 residues coordinate Zn(2+): His-189, Cys-193, Cys-195, and Cys-198. Residues 346 to 379 (PTCKKIMTVLTVGIFWPVLSLCYLIAPKSQFGRI) constitute an intramembrane region (discontinuously helical). Residues 380–386 (IHTPFMK) are Cytoplasmic-facing. The helical transmembrane segment at 387–404 (FIIHGASYFTFLLLLNLY) threads the bilayer. Topologically, residues 405-422 (SLVYNEDKKNTMGPALER) are extracellular. Residues 423–439 (IDYLLILWIIGMIWSDI) form a helical membrane-spanning segment. Topologically, residues 440-455 (KRLWYEGLEDFLEESR) are cytoplasmic. Residues 456-475 (NQLSFVMNSLYLATFALKVV) traverse the membrane as a helical segment. Residues 476–496 (AHNKFHDFADRKDWDAFHPTL) lie on the Extracellular side of the membrane. The helical transmembrane segment at 497–517 (VAEGLFAFANVLSYLRLFFMY) threads the bilayer. Topologically, residues 518 to 536 (TTSSILGPLQISMGQMLQD) are cytoplasmic. Residues 537–558 (FGKFLGMFLLVLFSFTIGLTQL) traverse the membrane as a helical segment. Over 559–623 (YDKGYTSKEQ…GEELQSFVGA (65 aa)) the chain is Extracellular. Cys-571 and Cys-576 are disulfide-bonded. The helical transmembrane segment at 624–644 (VIVGTYNVVVVIVLTKLLVAM) threads the bilayer. Over 645 to 793 (LHKSFQLIAN…SKYAMFYPRN (149 aa)) the chain is Cytoplasmic.

Belongs to the transient receptor (TC 1.A.4) family. STrpC subfamily. TRPC1 sub-subfamily. Heterotetramer with TRPC4 and/or TRPC5. Forms a heteromeric ion channel with TRPC4, with a 1:3 TRPC1:TRPC4 stoichiometry. Unlike other TRP channel proteins, does not form a homomeric channel. Interacts with TRPC4AP. Interacts with ITPR3. Interacts with MX1 and RNF24. Interacts with FKBP4. Interacts with PLSCR1. Interacts with PKD2L2. Forms a heterotetramer with PKD2 with a 2:2 stoichiometry; has distinct channel properties separate from PKD2 or TRPC1 homomers alone. As to quaternary structure, interacts with isoform 2 of TRPC3. In terms of processing, activation of PRKCA induces phosphorylation of TRPC1 and subsequent Ca2+ entry into cells. In terms of tissue distribution, seems to be ubiquitous.

It localises to the cell membrane. The catalysed reaction is Ca(2+)(in) = Ca(2+)(out). The enzyme catalyses Na(+)(in) = Na(+)(out). It catalyses the reaction Li(+)(in) = Li(+)(out). It carries out the reaction Cs(+)(in) = Cs(+)(out). Its activity is regulated as follows. May be operated by a phosphatidylinositol second messenger system activated by receptor tyrosine kinases or G-protein coupled receptors. Also activated by intracellular calcium store depletion. Inhibited by xanthine-based inhibitor Pico145. In terms of biological role, forms a receptor-activated non-selective calcium permeant cation channel. Forms a heteromeric ion channel with TRPC4 or TRPC5 that has reduced calcium permeability compared to the homomeric TRPC4 or TRPC5 channel. Also permeable to monovalent ions including sodium, lithium and cesium ions. Functionally, forms a receptor-activated non-selective calcium permeant cation channel. Also activated by intracellular calcium store depletion. The polypeptide is Short transient receptor potential channel 1 (TRPC1) (Homo sapiens (Human)).